A 294-amino-acid chain; its full sequence is Golgi phosphoprotein 3 homolog sauron (294 aa).

A disordered region spans residues 1–52 (MNRSDGLVRRSVKPRENGGAEGGLNANTPDDNQDALDNLKDQEDNIDDGDSK). Residues 37–52 (DNLKDQEDNIDDGDSK) show a composition bias toward basic and acidic residues. A 1,2-diacyl-sn-glycero-3-phospho-(1D-myo-inositol 4-phosphate) is bound by residues tryptophan 77, arginine 86, lysine 167, and arginine 170. The interval 186 to 197 (EKQNFLLFDMTT) is beta-hairpin required for oligomerization.

This sequence belongs to the GOLPH3/VPS74 family. As to quaternary structure, homooligomer. Interacts with botv, Ext2 and ttv. Interacts with Vti1. Interacts with Vps35, Rab5, Chc, Rab11, zip, Pav and Septin1.

Its subcellular location is the golgi apparatus membrane. It is found in the cytoplasmic vesicle. The protein resides in the cleavage furrow. In terms of biological role, phosphatidylinositol-4-phosphate-binding protein that links Golgi membranes to the cytoskeleton and may participate in the tensile force required for vesicle budding from the Golgi. Thereby, may play a role in Golgi membrane trafficking and could indirectly give its flattened shape to the Golgi apparatus. May also bind to the coatomer to regulate Golgi membrane trafficking. May play a role in anterograde transport from the Golgi to the plasma membrane and regulate secretion. Also involved in the control of the localization of Golgi enzymes through interaction with their cytoplasmic part. Functions in cytokinesis by regulating contractile ring formation and vesicle trafficking during cleavage furrow ingression. May also have a role in the intital steps of central spindle formation. Can also bind phosphatidylinositol-3-phosphate and phosphatidylinositol-5-phosphate in vitro. This Drosophila melanogaster (Fruit fly) protein is Golgi phosphoprotein 3 homolog sauron.